The sequence spans 338 residues: Probable dual-specificity RNA methyltransferase RlmN (338 aa).

Glu-89 functions as the Proton acceptor in the catalytic mechanism. Residues 95–325 (HNYGMSACVT…AILRKEQGHD (231 aa)) enclose the Radical SAM core domain. An intrachain disulfide couples Cys-102 to Cys-330. [4Fe-4S] cluster is bound by residues Cys-109, Cys-113, and Cys-116. S-adenosyl-L-methionine-binding positions include 156 to 157 (GE), Ser-188, 211 to 213 (SLH), and Asn-287. Cys-330 (S-methylcysteine intermediate) is an active-site residue.

Belongs to the radical SAM superfamily. RlmN family. Requires [4Fe-4S] cluster as cofactor.

The protein localises to the cytoplasm. The enzyme catalyses adenosine(2503) in 23S rRNA + 2 reduced [2Fe-2S]-[ferredoxin] + 2 S-adenosyl-L-methionine = 2-methyladenosine(2503) in 23S rRNA + 5'-deoxyadenosine + L-methionine + 2 oxidized [2Fe-2S]-[ferredoxin] + S-adenosyl-L-homocysteine. It carries out the reaction adenosine(37) in tRNA + 2 reduced [2Fe-2S]-[ferredoxin] + 2 S-adenosyl-L-methionine = 2-methyladenosine(37) in tRNA + 5'-deoxyadenosine + L-methionine + 2 oxidized [2Fe-2S]-[ferredoxin] + S-adenosyl-L-homocysteine. Specifically methylates position 2 of adenine 2503 in 23S rRNA and position 2 of adenine 37 in tRNAs. In Acholeplasma laidlawii (strain PG-8A), this protein is Probable dual-specificity RNA methyltransferase RlmN.